Consider the following 68-residue polypeptide: Small ribosomal subunit protein bS21 (68 aa).

The protein belongs to the bacterial ribosomal protein bS21 family.

The polypeptide is Small ribosomal subunit protein bS21 (Jannaschia sp. (strain CCS1)).